The sequence spans 686 residues: Leucine-rich repeat-containing protein 49 (686 aa).

7 LRR repeats span residues 113-134 (HLRL…SNLQ), 135-156 (RLIF…STLK), 157-178 (SLRV…ENLK), 179-200 (NLDV…NHLC), 201-222 (DLRV…NGLD), 223-244 (SLTE…DNLP), and 245-266 (CLQR…SCLA). One can recognise an LRRCT domain in the interval 279–317 (NPIAQESWYKHTVLQNMMQLRQLDMKRITEEERRVASVV). Disordered stretches follow at residues 311 to 332 (RRVA…HKQS) and 359 to 381 (ASTQ…DGGN). A coiled-coil region spans residues 319–341 (KKEEEKKRESHKQSLLKEKKRLT).

As to quaternary structure, part of the neuronal tubulin polyglutamylase complex which contains TPGS1, TPGS2, TTLL1, LRRC49 and NICN1. Interacts with PCM1; TTLL1, TPGS1, TPGS2 and LRRC49.

It localises to the cytoplasm. The protein localises to the cytoskeleton. The protein resides in the microtubule organizing center. It is found in the centrosome. Its subcellular location is the centriolar satellite. Subunit of the tubulin polyglutamylase complex (TPGC). The complex mediates cilia and flagella polyglutamylation which is essential for their biogenesis and motility. This chain is Leucine-rich repeat-containing protein 49 (Lrrc49), found in Mus musculus (Mouse).